A 426-amino-acid polypeptide reads, in one-letter code: Trophoblast glycoprotein (426 aa).

The signal sequence occupies residues 1-31 (MPGAGSRGPSAGDGRLRLARLALVLLGWVSA). Residues 32 to 361 (SAPSSSLPSS…ATLPQSLQTS (330 aa)) are Extracellular-facing. A compositionally biased stretch (low complexity) spans 34 to 51 (PSSSLPSSSTSPAAFLAS). The segment at 34–54 (PSSSLPSSSTSPAAFLASGSA) is disordered. The 39-residue stretch at 53–91 (SAQPPPAERCPAACECSEAARTVKCVNRNLLEVPADLPP) folds into the LRRNT domain. Disulfide bonds link Cys62-Cys68 and Cys66-Cys77. LRR repeat units lie at residues 92–113 (YVRN…AFAR), 116–139 (PLAD…GAFE), and 141–163 (LPGL…FTFA). The N-linked (GlcNAc...) asparagine glycan is linked to Asn124. N-linked (GlcNAc...) asparagine glycosylation is present at Asn166. 4 LRR repeats span residues 172-210 (PSPL…AALR), 215-238 (LRGL…LLDQ), 239-261 (LPSL…ASFR), and 262-281 (NLTH…VLHN). Residue Asn281 is glycosylated (N-linked (GlcNAc...) asparagine). The region spanning 289-352 (GLAHVRVFLD…LTSSDLDCDA (64 aa)) is the LRRCT domain. 2 disulfides stabilise this stretch: Cys304-Cys329 and Cys306-Cys350. The chain crosses the membrane as a helical span at residues 362 to 382 (YVFLGIVLALIGAIFLLVLYL). Residues 383–426 (NRKGIKKWMHNIRDACRDHMEGYHYRYEINADPRLTNLSSNSDV) lie on the Cytoplasmic side of the membrane. At Ser424 the chain carries Phosphoserine.

Post-translationally, highly glycosylated.

The protein resides in the cell membrane. May function as an inhibitor of Wnt/beta-catenin signaling by indirectly interacting with LRP6 and blocking Wnt3a-dependent LRP6 internalization. This is Trophoblast glycoprotein (Tpbg) from Rattus norvegicus (Rat).